We begin with the raw amino-acid sequence, 720 residues long: Mitogen-activated protein kinase 6 (720 aa).

Residue M1 forms a Peptide (Met-Gly) (interchain with G-Cter in ubiquitin) linkage. One can recognise a Protein kinase domain in the interval 20–316 (YMDLKPLGCG…AEEALSHPYM (297 aa)). Residues 26–34 (LGCGGNGLV) and K49 each bind ATP. D152 (proton acceptor) is an active-site residue. Position 189 is a phosphoserine; by PAK1, PAK2 and PAK3 (S189). The SEG motif signature appears at 189–191 (SEG). Positions 332-337 (FHIEDE) match the FRIEDE motif motif. Phosphoserine occurs at positions 386, 452, 554, and 556. The tract at residues 638 to 657 (SEMLETEPVEEGKRGERGRE) is disordered. The span at 647–657 (EEGKRGERGRE) shows a compositional bias: basic and acidic residues. Residue S683 is modified to Phosphoserine. Residues 698–714 (PSAMKSSPQIPHKTYSN) are compositionally biased toward polar residues. Residues 698–720 (PSAMKSSPQIPHKTYSNILKHLN) form a disordered region.

This sequence belongs to the protein kinase superfamily. CMGC Ser/Thr protein kinase family. MAP kinase subfamily. In terms of assembly, heterodimer with ERK4/MAPK4. Interacts with (via FRIEDE motif) MAPKAPK5. Interacts with UBE3A; this interaction may be indirect and mediated by HERC2, possibly via HERC2 interaction with NEURL4. Mg(2+) is required as a cofactor. Phosphorylated at Ser-189 by PAK1, PAK2 and PAK3 resulting in catalytic activation. Phosphorylated by MAPKAPK5 at other sites. Post-translationally, ubiquitination at Met-1 leads to degradation by the proteasome pathway. As to expression, highest levels within the nervous system, expressed in different tissues, mostly in skeletal muscle.

It is found in the cytoplasm. The protein resides in the nucleus. It catalyses the reaction L-seryl-[protein] + ATP = O-phospho-L-seryl-[protein] + ADP + H(+). It carries out the reaction L-threonyl-[protein] + ATP = O-phospho-L-threonyl-[protein] + ADP + H(+). Its activity is regulated as follows. Activated by phosphorylation at Ser-189. In terms of biological role, atypical MAPK protein. Phosphorylates microtubule-associated protein 2 (MAP2) and MAPKAPK5. The precise role of the complex formed with MAPKAPK5 is still unclear, but the complex follows a complex set of phosphorylation events: upon interaction with atypical MAPKAPK5, ERK3/MAPK6 is phosphorylated at Ser-189 and then mediates phosphorylation and activation of MAPKAPK5, which in turn phosphorylates ERK3/MAPK6. May promote entry in the cell cycle. The chain is Mitogen-activated protein kinase 6 (Mapk6) from Rattus norvegicus (Rat).